The primary structure comprises 431 residues: Glucose-1-phosphate adenylyltransferase (431 aa).

Lys-39 contacts beta-D-fructose 1,6-bisphosphate. AMP is bound by residues Arg-40, His-46, and Arg-52. Residue Tyr-114 coordinates alpha-D-glucose 1-phosphate. Residue Arg-130 participates in AMP binding. Alpha-D-glucose 1-phosphate is bound by residues Gly-179, 194-195 (EK), and Ser-212. Arg-386 contributes to the AMP binding site. Residues 419-423 (REMLR) and 429-431 (QER) contribute to the beta-D-fructose 1,6-bisphosphate site.

Belongs to the bacterial/plant glucose-1-phosphate adenylyltransferase family. As to quaternary structure, homotetramer.

It catalyses the reaction alpha-D-glucose 1-phosphate + ATP + H(+) = ADP-alpha-D-glucose + diphosphate. Its pathway is glycan biosynthesis; glycogen biosynthesis. With respect to regulation, allosterically activated by fructose-1,6-bisphosphate (F16BP) and inhibited by AMP. Its function is as follows. Involved in the biosynthesis of ADP-glucose, a building block required for the elongation reactions to produce glycogen. Catalyzes the reaction between ATP and alpha-D-glucose 1-phosphate (G1P) to produce pyrophosphate and ADP-Glc. The sequence is that of Glucose-1-phosphate adenylyltransferase from Enterobacter sp. (strain 638).